The following is a 329-amino-acid chain: GTP 3',8-cyclase (329 aa).

The Radical SAM core domain maps to 1–229 (MNPVDYLRIS…ESTIKGNGPA (229 aa)). Arg8 is a binding site for GTP. The [4Fe-4S] cluster site is built by Cys15 and Cys19. Tyr21 contacts S-adenosyl-L-methionine. Residue Cys22 coordinates [4Fe-4S] cluster. Arg60 provides a ligand contact to GTP. Gly64 provides a ligand contact to S-adenosyl-L-methionine. Thr91 lines the GTP pocket. Residue Ser115 coordinates S-adenosyl-L-methionine. Residue Lys155 participates in GTP binding. Met189 provides a ligand contact to S-adenosyl-L-methionine. [4Fe-4S] cluster contacts are provided by Cys252 and Cys255. 257-259 (RMR) contributes to the GTP binding site. Cys269 is a binding site for [4Fe-4S] cluster.

The protein belongs to the radical SAM superfamily. MoaA family. As to quaternary structure, monomer and homodimer. [4Fe-4S] cluster serves as cofactor.

The enzyme catalyses GTP + AH2 + S-adenosyl-L-methionine = (8S)-3',8-cyclo-7,8-dihydroguanosine 5'-triphosphate + 5'-deoxyadenosine + L-methionine + A + H(+). The protein operates within cofactor biosynthesis; molybdopterin biosynthesis. Its function is as follows. Catalyzes the cyclization of GTP to (8S)-3',8-cyclo-7,8-dihydroguanosine 5'-triphosphate. The protein is GTP 3',8-cyclase of Rippkaea orientalis (strain PCC 8801 / RF-1) (Cyanothece sp. (strain PCC 8801)).